A 244-amino-acid polypeptide reads, in one-letter code: Transcriptional activator protein Anr (244 aa).

21-149 is an a nucleoside 3',5'-cyclic phosphate binding site; sequence APLCLPLSLN…RVMSREIRDD (129 aa). Positions 159–232 constitute an HTH crp-type domain; the sequence is KTADERIATF…GKEVHILDPI (74 aa). Positions 192–211 form a DNA-binding region, H-T-H motif; sequence RNEIGNYLGLAVETVSRVFT.

Transcriptional activator of anaerobic gene expression. Regulates the expression of the components of the hydrogen cyanide synthase (HcnABC) in a positive manner. May also act as an iron sensor. This Pseudomonas protegens (strain DSM 19095 / LMG 27888 / CFBP 6595 / CHA0) protein is Transcriptional activator protein Anr.